Consider the following 513-residue polypeptide: L-arabinose transport ATP-binding protein AraG (513 aa).

ABC transporter domains are found at residues 6–243 and 264–508; these read LEMR…GMVG and VKNW…TKTA. Residue 38–45 participates in ATP binding; that stretch reads GENGAGKS.

This sequence belongs to the ABC transporter superfamily.

The protein resides in the cell membrane. It carries out the reaction L-arabinose(out) + ATP + H2O = L-arabinose(in) + ADP + phosphate + H(+). Its function is as follows. Part of the binding-protein-dependent transport system for L-arabinose. Probably responsible for energy coupling to the transport system. This Geobacillus stearothermophilus (Bacillus stearothermophilus) protein is L-arabinose transport ATP-binding protein AraG (araG).